Consider the following 89-residue polypeptide: Large ribosomal subunit protein bL27 (89 aa).

It belongs to the bacterial ribosomal protein bL27 family.

This Bacteroides thetaiotaomicron (strain ATCC 29148 / DSM 2079 / JCM 5827 / CCUG 10774 / NCTC 10582 / VPI-5482 / E50) protein is Large ribosomal subunit protein bL27.